We begin with the raw amino-acid sequence, 475 residues long: UDP-N-acetylmuramate--L-alanine ligase (475 aa).

Residue 125 to 131 (GTHGKTT) participates in ATP binding.

It belongs to the MurCDEF family.

It is found in the cytoplasm. It catalyses the reaction UDP-N-acetyl-alpha-D-muramate + L-alanine + ATP = UDP-N-acetyl-alpha-D-muramoyl-L-alanine + ADP + phosphate + H(+). It functions in the pathway cell wall biogenesis; peptidoglycan biosynthesis. Its function is as follows. Cell wall formation. This Actinobacillus pleuropneumoniae serotype 5b (strain L20) protein is UDP-N-acetylmuramate--L-alanine ligase.